Consider the following 359-residue polypeptide: Heat-inducible transcription repressor HrcA (359 aa).

It belongs to the HrcA family.

Functionally, negative regulator of class I heat shock genes (grpE-dnaK-dnaJ and groELS operons). Prevents heat-shock induction of these operons. The chain is Heat-inducible transcription repressor HrcA from Sinorhizobium medicae (strain WSM419) (Ensifer medicae).